The primary structure comprises 171 residues: UPF0303 protein YPN_2129 (171 aa).

The protein belongs to the UPF0303 family.

This is UPF0303 protein YPN_2129 from Yersinia pestis bv. Antiqua (strain Nepal516).